The chain runs to 963 residues: Spliceosome associated factor 3, U4/U6 recycling protein (963 aa).

Low complexity predominate over residues 1-11; it reads MATAAETSASE. Disordered stretches follow at residues 1–36 and 50–90; these read MATA…RTRR and TMGP…YDEE. At Ala2 the chain carries N-acetylalanine. Residues 2 to 351 are mediates interaction with PRPF3; that stretch reads ATAAETSASE…LVPDLWIRYS (350 aa). 2 positions are modified to phosphoserine: Ser10 and Ser16. Residues 14–23 show a composition bias toward basic and acidic residues; it reads AESKAGPKAD. Positions 21-46 form a coiled coil; the sequence is KADGEEDEVKAARTRRKVLSRAVAAA. Positions 57–69 are enriched in acidic residues; the sequence is QQEEGVSESDGDE. A coiled-coil region spans residues 82–110; it reads EYEWEYDEEEEKNQLEIERLEEQLSINVY. 8 HAT repeats span residues 126-158, 164-195, 201-237, 242-275, 324-356, 359-391, 394-430, and 487-520; these read GELT…DEIS, LDRE…YSVG, GGLE…FESA, ARLE…WSED, GDPA…YLDR, KVKD…AMER, VDHQ…YLRR, and NNMQ…LERA. At Ser215 the chain carries Phosphoserine. A required for interaction with USP4 region spans residues 487-520; it reads NNMQKARELWDSIMTRGNAKYANMWLEYYNLERA. A necessary and sufficient for U6 snRNA binding region spans residues 537–953; sequence CTSDYPEHVC…AATEAPKMSN (417 aa). Residues 559-619 are a coiled coil; the sequence is LEDWDIAVQK…ALKKKKKIRG (61 aa). A compositionally biased stretch (basic and acidic residues) spans 590 to 601; the sequence is LVQQEEEKAEQR. The tract at residues 590–694 is disordered; the sequence is LVQQEEEKAE…AASLKRDMPK (105 aa). A required for nuclear localization region spans residues 600–670; it reads QRKRARAEKK…EVAAGPAGKC (71 aa). Residues 601–608 carry the Nuclear localization signal motif; it reads RKRARAEK. Residues 602–617 are compositionally biased toward basic residues; the sequence is KRARAEKKALKKKKKI. Residues 626-639 show a composition bias toward acidic residues; that stretch reads DEDDEKEWGDDEEE. At Ser650 the chain carries Phosphoserine. Thr657 is subject to Phosphothreonine. The segment covering 677-694 has biased composition (basic and acidic residues); it reads PPSKQKEKAASLKRDMPK. The RRM 1 domain occupies 704–782; the sequence is ITVFVSNLPY…RPMFVSPCVD (79 aa). Ser769, Ser795, and Ser852 each carry phosphoserine. Residues 801 to 878 form the RRM 2 domain; the sequence is HKLFISGLPF…NIIKVAISNP (78 aa). Residues 878–898 are disordered; the sequence is PPQRKVPEKPETRKAPGGPML. Residues 882-891 show a composition bias toward basic and acidic residues; sequence KVPEKPETRK. Arg906 bears the Omega-N-methylarginine mark. The interval 920-948 is disordered; that stretch reads LQRPSAAAPQAENGPAAAPAVAAPAATEA. A compositionally biased stretch (low complexity) spans 925-948; sequence AAAPQAENGPAAAPAVAAPAATEA.

As to quaternary structure, component of the 7SK snRNP complex at least composed of P-TEFb (composed of CDK9 and CCNT1/cyclin-T1), HEXIM1, HEXIM2, BCDIN3, SART3 proteins and 7SK and U6 snRNAs. Interacts with AGO1 and AGO2. Interacts with PRPF3 and USP4; the interaction with PRPF3 is direct and recruits USP4 to its substrate PRPF3. Interacts with USP15; the interaction is direct. Interacts with HIV-1 Tat. In terms of tissue distribution, ubiquitously expressed.

The protein resides in the nucleus. The protein localises to the nucleoplasm. Its subcellular location is the cajal body. It localises to the nucleus speckle. It is found in the cytoplasm. Functionally, U6 snRNP-binding protein that functions as a recycling factor of the splicing machinery. Promotes the initial reassembly of U4 and U6 snRNPs following their ejection from the spliceosome during its maturation. Also binds U6atac snRNPs and may function as a recycling factor for U4atac/U6atac spliceosomal snRNP, an initial step in the assembly of U12-type spliceosomal complex. The U12-type spliceosomal complex plays a role in the splicing of introns with non-canonical splice sites. May also function as a substrate-targeting factor for deubiquitinases like USP4 and USP15. Recruits USP4 to ubiquitinated PRPF3 within the U4/U5/U6 tri-snRNP complex, promoting PRPF3 deubiquitination and thereby regulating the spliceosome U4/U5/U6 tri-snRNP spliceosomal complex disassembly. May also recruit the deubiquitinase USP15 to histone H2B and mediate histone deubiquitination, thereby regulating gene expression and/or DNA repair. May play a role in hematopoiesis probably through transcription regulation of specific genes including MYC. Its function is as follows. Regulates Tat transactivation activity through direct interaction. May be a cellular factor for HIV-1 gene expression and viral replication. The protein is Spliceosome associated factor 3, U4/U6 recycling protein of Homo sapiens (Human).